An 892-amino-acid chain; its full sequence is Histone deacetylase 4 (892 aa).

The tract at residues 145–225 (NGNLSNLSVP…MSNVNGHDNS (81 aa)) is disordered. 2 stretches are compositionally biased toward polar residues: residues 171–192 (SAPT…ISQL) and 208–222 (ESNS…VNGH). Positions 481–822 (STGLGYDPLM…VQALIGESDD (342 aa)) are histone deacetylase. H628 is an active-site residue.

It belongs to the histone deacetylase family. HD type 2 subfamily.

The protein localises to the nucleus. The catalysed reaction is N(6)-acetyl-L-lysyl-[histone] + H2O = L-lysyl-[histone] + acetate. Its function is as follows. Responsible for the deacetylation of lysine residues on the N-terminal part of the core histones (H2A, H2B, H3 and H4). Histone deacetylation gives a tag for epigenetic repression and plays an important role in transcriptional regulation, cell cycle progression and developmental events. Histone deacetylases act via the formation of large multiprotein complexes. The chain is Histone deacetylase 4 (hda-4) from Caenorhabditis briggsae.